Reading from the N-terminus, the 163-residue chain is Retinoic acid receptor responder protein 2 (163 aa).

Residues 1-20 (MKYLLISLALWLGMVGIHGT) form the signal peptide. Cystine bridges form between Cys-79/Cys-89, Cys-100/Cys-119, and Cys-103/Cys-135. Residues 158-163 (RALKHK) constitute a propeptide that is removed on maturation.

In terms of processing, secreted in an inactive precursor form, prochemerin, which is proteolytically processed by a variety of extracellular proteases to generate forms with differing levels of bioactivity. For example, the removal of six amino acids results in chemerin-157, which exhibits the highest activity, while removal of seven amino acids results in chemerin-156 which has slightly less activity. Some proteases are able to cleave at more than one site and chemerin forms may be sequentially processed by different enzymes to modulate activity levels. The coordinated expression and activity of chemerin-modifying enzymes is essential for regulating its bioactivation, inactivation and, consequently, biological function. Cathepsin G cleaves seven C-terminal amino acids from prochemerin (chemerin-156), elastase is able to cleave six (chemerin-157), eight (chemerin-155) or eleven (chemerin-152), plasmin cleaves five amino acids (chemerin-158), and tryptase cleaves five (chemerin-158) or eight (chemerin-155). Multiple cleavages might be required to fully activate chemerin, with an initial tryptase cleavage resulting in chemerin with low activity (chemerin-158), and a second cleavage by carboxypeptidase N or B producing highly active chemerin (chemerin-157).

It is found in the secreted. Adipocyte-secreted protein (adipokine) that regulates adipogenesis, metabolism and inflammation through activation of the chemokine-like receptor 1 (CMKLR1). Also acts as a ligand for CMKLR2. Can also bind to C-C chemokine receptor-like 2 (CCRL2), but with a lower affinity than it does to CMKLR1 or CMKLR2. Positively regulates adipocyte differentiation, modulates the expression of adipocyte genes involved in lipid and glucose metabolism and might play a role in angiogenesis, a process essential for the expansion of white adipose tissue. Also acts as a pro-inflammatory adipokine, causing an increase in secretion of pro-inflammatory and prodiabetic adipokines, which further impair adipose tissue metabolic function and have negative systemic effects including impaired insulin sensitivity, altered glucose and lipid metabolism, and a decrease in vascular function in other tissues. Can have both pro- and anti-inflammatory properties depending on the modality of enzymatic cleavage by different classes of proteases. Acts as a chemotactic factor for leukocyte populations expressing CMKLR1, particularly immature plasmacytoid dendritic cells, but also immature myeloid DCs, macrophages and natural killer cells. Exerts an anti-inflammatory role by preventing TNF/TNFA-induced VCAM1 expression and monocytes adhesion in vascular endothelial cells. The effect is mediated via inhibiting activation of NF-kappa-B and CRK/p38 through stimulation of AKT1/NOS3 signaling and nitric oxide production. Its dual role in inflammation and metabolism might provide a link Exhibits an antimicrobial function in the skin. The protein is Retinoic acid receptor responder protein 2 (RARRES2) of Cricetulus griseus (Chinese hamster).